Consider the following 580-residue polypeptide: MAVRQALGRGLQLGRALLLRFAPKPGPLFGWGKPGPAAAWGRGERPGQVVSPGAQPRPVGLPLPDRYRFFRQSVAGLAARIQRQFMVRARGGAGPCGRAVFLAFGLGLGLIEEKQAEGRRAASACQEIQAIFTQKTKRVSDPLDTRCWQGFRLEDYLIGQAIGKGCNAAVYEATMPTLPQHLEKAKHLGLIGKGPDVVLKGADGEQAPGTPTFPFAIKMMWNISAGSSSEAILSKMSQELVPASRVALAGEYGAVTYRRSRDGPKQLAPHPNIIRVFRAFTSSVPLLPGALADYPDMLPPHYYPEGLGHGRTLFLVMKNYPCTLRQYLEEQTPSSRLATMMTLQLLEGVDHLVQQGIAHRDLKSDNILVEWDSDGCPWLVISDFGCCLADQHVGLRLPFNSSSVERGGNGSLMAPEVSTAHSGPSAVIDYSKADTWAVGAIAYEIFGLANPFYGQGSAHLESRSYQEAQLPEMPESVPPEARRLVRSLLQREASKRPSARLAANVLHLSLWGEHLLALKNLKLDKMIAWLLQQSAATLLADRLREKSCVETKLQMLFLANLECEALCQAALLLSSWRAAP.

The N-terminal 77 residues, 1 to 77, are a transit peptide targeting the mitochondrion; sequence MAVRQALGRG…RFFRQSVAGL (77 aa). The Mitochondrial intermembrane portion of the chain corresponds to 78-93; it reads AARIQRQFMVRARGGA. The chain crosses the membrane as a helical span at residues 94–110; that stretch reads GPCGRAVFLAFGLGLGL. Residues 111–117 are required for outer membrane localization; that stretch reads IEEKQAE. At 111 to 580 the chain is on the cytoplasmic side; the sequence is IEEKQAEGRR…LLLSSWRAAP (470 aa). The region spanning 156–510 is the Protein kinase domain; sequence YLIGQAIGKG…LAANVLHLSL (355 aa). Residues 162 to 170 and lysine 186 contribute to the ATP site; that span reads IGKGCNAAV. At serine 227 the chain carries Phosphoserine; by autocatalysis. Aspartate 361 acts as the Proton acceptor in catalysis. Position 401 is a phosphoserine; by autocatalysis (serine 401).

The protein belongs to the protein kinase superfamily. Ser/Thr protein kinase family. Upon mitochondrial depolarization, it forms a supercomplex with TOM and TIM23 complexes. PINK1-TOM-TIM23 supercomplex formation requires PINK1 interaction with TOMM20 and TOMM70 and is critical for PINK1 stabilization at the outer mitochondrial membrane, kinase activation and downstream mitophagy. Upon mitochondrial depolarization, interacts with TIMM23; the interaction is required for PINK1 accumulation at the outer mitochondrial membrane, kinase activation by autophosphorylation and PRKN recruitement to mitochondria. Interacts with PRKN. Interacts with FBXO7. Forms a complex with PRKN and PARK7. Interacts with NENF. Mg(2+) is required as a cofactor. In terms of processing, proteolytically cleaved. In healthy cells, the precursor is continuously imported into the inner mitochondrial membrane (IMM), where it is proteolytically cleaved by mitochondrial-processing peptidase (MPP) and then undergoes further proteolytic cleavage by PARL or AFG3L2 to give rise to the 52 kDa short form. The 52 kDa short form is then released into the cytosol where it rapidly undergoes proteasome-dependent degradation. In unhealthy cells, when cellular stress conditions lead to the loss of mitochondrial membrane potential, mitochondrial import is impaired leading to the precursor accumulating on the outer mitochondrial membrane (OMM). If accumulation at the OMM fails and it is imported into the depolarized mitochondria, it undergoes cleavage by the IMM protease OMA1, promoting its subsequent degradation by the proteasome. Post-translationally, autophosphorylated. Loss of mitochondrial membrane potential results in the precursor accumulating on the outer mitochondrial membrane (OMM) where it is activated by autophosphorylation. Autophosphorylation at Ser-227 and Ser-401 is essential for selective recruitment of PRKN to depolarized mitochondria, via PINK1-dependent phosphorylation of ubiquitin and PRKN. In terms of tissue distribution, high levels expressed in testis, lower levels in brain, heart, lung, liver and kidney.

It is found in the mitochondrion outer membrane. Its subcellular location is the mitochondrion inner membrane. The protein resides in the cytoplasm. It localises to the cytosol. The catalysed reaction is L-seryl-[protein] + ATP = O-phospho-L-seryl-[protein] + ADP + H(+). It catalyses the reaction L-threonyl-[protein] + ATP = O-phospho-L-threonyl-[protein] + ADP + H(+). Its function is as follows. Serine/threonine-protein kinase which acts as a sensor of mitochondrial damage and protects against mitochondrial dysfunction during cellular stress. It phosphorylates mitochondrial proteins to coordinate mitochondrial quality control mechanisms that remove and replace dysfunctional mitochondrial components. Depending on the severity of mitochondrial damage, activity ranges from preventing apoptosis and stimulating mitochondrial biogenesis to eliminating severely damaged mitochondria via PINK1-PRKN-dependent mitophagy. When cellular stress results in irreversible mitochondrial damage, PINK1 accumulates at the outer mitochondrial membrane (OMM) where it phosphorylates pre-existing polyubiquitin chains at 'Ser-65', recruits PRKN from the cytosol to the OMM and activates PRKN by phosphorylation at 'Ser-65'. Activated PRKN then ubiquinates VDAC1 and other OMM proteins to initiate mitophagy. The PINK1-PRKN pathway also promotes fission of damaged mitochondria by phosphorylating and thus promoting the PRKN-dependent degradation of mitochondrial proteins involved in fission such as MFN2. This prevents the refusion of unhealthy mitochondria with the mitochondrial network or initiates mitochondrial fragmentation facilitating their later engulfment by autophagosomes. Also promotes mitochondrial fission independently of PRKN and ATG7-mediated mitophagy, via the phosphorylation and activation of DNM1L. Regulates motility of damaged mitochondria by promoting the ubiquitination and subsequent degradation of MIRO1 and MIRO2; in motor neurons, this likely inhibits mitochondrial intracellular anterograde transport along the axons which probably increases the chance of the mitochondria undergoing mitophagy in the soma. Required for ubiquinone reduction by mitochondrial complex I by mediating phosphorylation of complex I subunit NDUFA10. Phosphorylates LETM1, positively regulating its mitochondrial calcium transport activity. The polypeptide is Serine/threonine-protein kinase PINK1, mitochondrial (Pink1) (Mus musculus (Mouse)).